The following is a 496-amino-acid chain: Glycerol kinase (496 aa).

Thr12 is an ADP binding site. The ATP site is built by Thr12, Thr13, and Ser14. Thr12 is a binding site for sn-glycerol 3-phosphate. ADP is bound at residue Arg16. Sn-glycerol 3-phosphate contacts are provided by Arg82, Glu83, and Tyr134. Arg82, Glu83, and Tyr134 together coordinate glycerol. Position 230 is a phosphohistidine; by HPr (His230). Sn-glycerol 3-phosphate is bound at residue Asp244. Glycerol is bound by residues Asp244 and Gln245. Thr266 and Gly309 together coordinate ADP. Positions 266, 309, 313, and 410 each coordinate ATP. ADP-binding residues include Gly410 and Asn414.

It belongs to the FGGY kinase family. In terms of assembly, homotetramer and homodimer (in equilibrium). In terms of processing, the phosphoenolpyruvate-dependent sugar phosphotransferase system (PTS), including enzyme I, and histidine-containing protein (HPr) are required for the phosphorylation, which leads to the activation of the enzyme.

It catalyses the reaction glycerol + ATP = sn-glycerol 3-phosphate + ADP + H(+). Its pathway is polyol metabolism; glycerol degradation via glycerol kinase pathway; sn-glycerol 3-phosphate from glycerol: step 1/1. With respect to regulation, activated by phosphorylation and inhibited by fructose 1,6-bisphosphate (FBP). Functionally, key enzyme in the regulation of glycerol uptake and metabolism. Catalyzes the phosphorylation of glycerol to yield sn-glycerol 3-phosphate. This Bacillus thuringiensis (strain Al Hakam) protein is Glycerol kinase.